A 283-amino-acid polypeptide reads, in one-letter code: MIRRQARERREYLYRKSLQLQEATKIQKRQQLKAALASGKPLPKDVADDEELRKTIAYDESVQDEIDDEYSAMSGITDPKVVVTTSRDPSTRLSQFAKEVKLLFPTSIRLNRGGTVLPSLVSACKTSASSDLIVLHEHRGVPTAMTVSHFPHGPTAYFSLHNVVLRHDLPDTGNMSEVHPHLIFDNFTTDLGKRVVQILKHLFPPGVKKDSARVITFANRGDFISVRQHVYVKTREGVELAEVGPRFEMRLYDLRLGTLENKDADVEWRMHGFMRTANKKDYL.

A Brix domain is found at 79–260 (PKVVVTTSRD…LYDLRLGTLE (182 aa)).

In terms of assembly, component of a heterotrimeric complex containing IMP3, IMP4 and MPP10.

The protein localises to the nucleus. Its subcellular location is the nucleolus. Its function is as follows. Component of the U3 small nucleolar ribonucleoprotein. Required for the early cleavages at sites A0, A1 and A2 during 18S ribosomal pre-RNA processing. This Yarrowia lipolytica (strain CLIB 122 / E 150) (Yeast) protein is U3 small nucleolar ribonucleoprotein protein IMP4 (IMP4).